The chain runs to 1049 residues: Ataxin-2-like protein (1049 aa).

Methionine 1 is subject to N-acetylmethionine. The segment at 1 to 54 (MLKPQPPQQTSQPQQPPPTQQAVARRSPGGTSPPNGGLPGPLTATAAPPGPPAA) is disordered. Residue serine 27 is modified to Phosphoserine. Threonine 45 carries the phosphothreonine modification. The interaction with MPL stretch occupies residues 96–119 (SVRGQTTGKGPPQSPVFEGVYNNS). Position 109 is a phosphoserine (serine 109). The residue at position 116 (tyrosine 116) is a Phosphotyrosine. The region spanning 120 to 197 (RMLHFLTAVV…VLLVHFRNVD (78 aa)) is the Sm domain. Lysine 205 carries the post-translational modification N6-acetyllysine. At serine 236 the chain carries Phosphoserine. Tyrosine 262 is modified (phosphotyrosine). Serine 304 carries the post-translational modification Phosphoserine. Tyrosine 307 is modified (phosphotyrosine). Over residues 314–326 (ENDDGRTEEEKHS) the composition is skewed to basic and acidic residues. Disordered stretches follow at residues 314–522 (ENDD…RNLE), 554–573 (QFKL…FPSR), 578–704 (EAKG…LTAG), 736–772 (VSNS…PMMQ), 824–852 (SNPR…AEQP), 868–944 (HATQ…SSFP), and 999–1049 (PQGH…PPGN). The span at 328–340 (VQRQGSGRESPSL) shows a compositional bias: polar residues. Phosphoserine occurs at positions 333 and 337. A Glycyl lysine isopeptide (Lys-Gly) (interchain with G-Cter in SUMO2) cross-link involves residue lysine 346. Residue tyrosine 347 is modified to Phosphotyrosine. Arginine 359 is subject to Asymmetric dimethylarginine. Over residues 361 to 378 (GVRCSSSRGGRPGLSSLP) the composition is skewed to low complexity. 3 positions are modified to phosphoserine: serine 389, serine 407, and serine 453. The span at 454–466 (PKSAAPAPVSASC) shows a compositional bias: low complexity. Positions 475 to 487 (VASSASIPVTSSV) are enriched in polar residues. A phosphoserine mark is found at serine 496 and serine 499. Residues 508 to 519 (DVKELPTKEPSR) show a composition bias toward basic and acidic residues. Phosphoserine occurs at positions 560, 561, and 562. Positions 578 to 587 (EAKGKEKEVD) are enriched in basic and acidic residues. Serine 597 is modified (phosphoserine). Threonine 635 is modified (phosphothreonine). Phosphoserine is present on residues serine 637, serine 677, serine 683, and serine 687. The segment covering 681-697 (STSTPTSPGPRTHSTPS) has biased composition (low complexity). Composition is skewed to polar residues over residues 824–845 (SNPR…STPQ) and 878–902 (QPAT…QHQA). The span at 935 to 944 (SAQSPQSSFP) shows a compositional bias: low complexity. Residues 1033–1042 (QVQSHPSQQL) show a composition bias toward polar residues.

This sequence belongs to the ataxin-2 family. In terms of assembly, interacts with MPL/TPOR and EPOR and dissociates after ligand stimulation. Interacts with DDX6, G3BP, and ATXN2. Interacts with PRMT1. Interacts with CIC and ATXN1. In terms of processing, thrombopoietin triggers the phosphorylation on tyrosine residues in a way that is dependent on MPL C-terminal domain. Post-translationally, asymmetrically dimethylated. Probably methylated by PRMT1. In terms of tissue distribution, expressed in cerebellum.

Its subcellular location is the membrane. The protein localises to the cytoplasm. The protein resides in the nucleus speckle. It is found in the cytoplasmic granule. Its function is as follows. Involved in the regulation of stress granule and P-body formation. This is Ataxin-2-like protein (Atxn2l) from Mus musculus (Mouse).